The chain runs to 862 residues: Putative PIP5K1A and PSMD4-like protein (862 aa).

The PIPK domain occupies 28–396 (TSSALKGAIQ…WFQRFMCNTV (369 aa)). Disordered stretches follow at residues 404–424 (PSPS…GSSG) and 453–481 (HLGC…PSFS). Positions 412-424 (SGSSFSQRAGSSG) are enriched in low complexity. A VWFA domain is found at 490-673 (MLTTSVDNSE…LADALISFPI (184 aa)). The UIM 1 domain maps to 696–715 (SADPELALVLRVFMEEQRQR). Residues 716-740 (QEEEARQAAAASAAEAGIATTGTED) are disordered. The segment covering 722–731 (QAAAASAAEA) has biased composition (low complexity). The 18-residue stretch at 766 to 783 (MTEEEKIVCAMQMSLQGA) folds into the UIM 2 domain. Residues 826–862 (NLPGVDPNNEAIRNAVGSLASQATKDSKKDKKEEDKK) are disordered. Residues 850 to 862 (KDSKKDKKEEDKK) are compositionally biased toward basic and acidic residues.

Testis-specific.

The protein resides in the cytoplasm. Its function is as follows. Has negligible PIP5 kinase activity. Binds to ubiquitinated proteins. This is Putative PIP5K1A and PSMD4-like protein (PIPSL) from Homo sapiens (Human).